Here is a 186-residue protein sequence, read N- to C-terminus: Apolipophorin-3 (186 aa).

The first 18 residues, 1 to 18 (MAAKYVFVVAACSALAQA), serve as a signal peptide directing secretion. Residues 19–23 (GIVRR) constitute a propeptide that is removed on maturation.

Belongs to the insect apolipophorin-3 family. As to quaternary structure, equilibrium between a soluble monomer and a bound lipoprotein form. Apolipophorin-3 associates with lipophorin during lipid loading until each particle contains 9 or 14 molecules of apolipophorin-3. Expressed in hemolymph. Also found in hemocytes and fat body.

The protein resides in the secreted. Functionally, assists in the loading of diacylglycerol, generated from triacylglycerol stores in the fat body through the action of adipokinetic hormone, into lipophorin, the hemolymph lipoprotein. It increases the lipid carrying capacity of lipophorin by covering the expanding hydrophobic surface resulting from diacylglycerol uptake. It thus plays a critical role in the transport of lipids during flight in several species of insects. Has antibacterial activity against the Gram-positive bacteria L.monocytogenes (MIC=6.5 uM). Lacks antibacterial activity against the Gram-positive bacteria B.circulans, M.luteus, S.aureus, and S.lutea, and the Gram-negative bacteria E.coli D31, E.coli ATCC 25922, and S.typhimurium. Lacks antifungal activity against S.cerevisiae, P.pastoris, Z.marxianus, C.albicans, C.wickerhamii, A.niger, F.oxysporum, and T.harizianum. This is Apolipophorin-3 from Galleria mellonella (Greater wax moth).